A 375-amino-acid chain; its full sequence is Methylthioribose-1-phosphate isomerase (375 aa).

The Proton donor role is filled by Asp-259.

The protein belongs to the eIF-2B alpha/beta/delta subunits family. MtnA subfamily.

Its subcellular location is the cytoplasm. It localises to the nucleus. It carries out the reaction 5-(methylsulfanyl)-alpha-D-ribose 1-phosphate = 5-(methylsulfanyl)-D-ribulose 1-phosphate. It participates in amino-acid biosynthesis; L-methionine biosynthesis via salvage pathway; L-methionine from S-methyl-5-thio-alpha-D-ribose 1-phosphate: step 1/6. Functionally, catalyzes the interconversion of methylthioribose-1-phosphate (MTR-1-P) into methylthioribulose-1-phosphate (MTRu-1-P). This is Methylthioribose-1-phosphate isomerase from Populus trichocarpa (Western balsam poplar).